Consider the following 108-residue polypeptide: Biogenesis of lysosome-related organelles complex 1 subunit CNL1 (108 aa).

Belongs to the BLOC1S4 family. As to quaternary structure, component of the biogenesis of lysosome-related organelles complex-1 (BLOC-1).

It localises to the cytoplasm. Its function is as follows. Component of the biogenesis of lysosome-related organelles complex-1 (BLOC-1), a complex that is involved in endosomal cargo sorting. The polypeptide is Biogenesis of lysosome-related organelles complex 1 subunit CNL1 (CLN1) (Zygosaccharomyces rouxii (strain ATCC 2623 / CBS 732 / NBRC 1130 / NCYC 568 / NRRL Y-229)).